We begin with the raw amino-acid sequence, 91 residues long: Probable Fe(2+)-trafficking protein (91 aa).

The protein belongs to the Fe(2+)-trafficking protein family.

Its function is as follows. Could be a mediator in iron transactions between iron acquisition and iron-requiring processes, such as synthesis and/or repair of Fe-S clusters in biosynthetic enzymes. This chain is Probable Fe(2+)-trafficking protein, found in Burkholderia multivorans (strain ATCC 17616 / 249).